The chain runs to 263 residues: uncharacterized protein (263 aa).

The stretch at 53 to 89 (SAVTASKFSPDGRWLVNLTDQGYVQLWDVHKGERVKT) is one WD repeat.

This is an uncharacterized protein from Deinococcus radiodurans (strain ATCC 13939 / DSM 20539 / JCM 16871 / CCUG 27074 / LMG 4051 / NBRC 15346 / NCIMB 9279 / VKM B-1422 / R1).